We begin with the raw amino-acid sequence, 792 residues long: Probable exo-1,4-beta-xylosidase xlnD (792 aa).

Residues 1–20 (MSVAKSIAAVLVALLPGALA) form the signal peptide. 5 N-linked (GlcNAc...) asparagine glycosylation sites follow: Asn23, Asn87, Asn118, Asn142, and Asn246. Asp310 is an active-site residue. Residues Asn326, Asn385, Asn404, Asn440, Asn477, Asn518, Asn679, and Asn701 are each glycosylated (N-linked (GlcNAc...) asparagine).

The protein belongs to the glycosyl hydrolase 3 family.

It localises to the secreted. It carries out the reaction Hydrolysis of (1-&gt;4)-beta-D-xylans, to remove successive D-xylose residues from the non-reducing termini.. The protein operates within glycan degradation; xylan degradation. In terms of biological role, xylan 1,4-beta-xylosidase involved in the hydrolysis of xylan, a major structural heterogeneous polysaccharide found in plant biomass representing the second most abundant polysaccharide in the biosphere, after cellulose. In Aspergillus fumigatus (strain ATCC MYA-4609 / CBS 101355 / FGSC A1100 / Af293) (Neosartorya fumigata), this protein is Probable exo-1,4-beta-xylosidase xlnD (xlnD).